Reading from the N-terminus, the 433-residue chain is DNA methyltransferase 1-associated protein 1 (433 aa).

Residues 1–204 (MSADVRDILD…EVVALLAKAK (204 aa)) form a required for nuclear localization region. Residues 148–197 (NNWSKVQTDHLFDLARRFDLRFIVMADRWNRQQHGTKTVEELKERYYEVV) enclose the Myb-like domain. Positions 186–281 (VEELKERYYE…ADQQNEHASN (96 aa)) form a coiled coil. A compositionally biased stretch (basic and acidic residues) spans 252–264 (EARKKERERKTQD). The interval 252–305 (EARKKERERKTQDLQKLISQADQQNEHASNTPSTRKYEKKLHKKKVHQQPRPSR) is disordered. Positions 268 to 285 (LISQADQQNEHASNTPST) are enriched in polar residues. Residues 288-299 (YEKKLHKKKVHQ) are compositionally biased toward basic residues.

Interacts with Rel. Interacts with akirin and Bap55.

It is found in the nucleus. The protein localises to the cytoplasm. Involved in transcription repression and activation. Required for larvae and pupal development, and for normal innate immune responses. Involved in modulating the activation of the immune deficiency pathway (Imd), acting either downstream of, or at the level of, the NF-kappa-B factor Rel. Possibly functions with akirin to regulate Rel, and its interaction with the Brahma complex protein Bap55 suggests that it may regulate the IMD pathway at the level of chromatin remodeling. The chain is DNA methyltransferase 1-associated protein 1 from Drosophila melanogaster (Fruit fly).